Here is a 142-residue protein sequence, read N- to C-terminus: UPF0332 protein PH1297 (142 aa).

This sequence belongs to the UPF0332 family.

This chain is UPF0332 protein PH1297, found in Pyrococcus horikoshii (strain ATCC 700860 / DSM 12428 / JCM 9974 / NBRC 100139 / OT-3).